A 379-amino-acid polypeptide reads, in one-letter code: Fimbrium subunit Fim1C (379 aa).

A signal peptide spans 1–17 (MEVKSLLMVMATLTIAG). C18 is lipidated: N-palmitoyl cysteine. C18 is lipidated: S-diacylglycerol cysteine. Residues 18–45 (CSQNEMTEMNPDTNRTIGLDVYTEVQTR) constitute a propeptide that is removed on maturation.

Belongs to the bacteroidetes fimbrillin superfamily. Mfa-like family. In terms of assembly, may be part of the fimbrial tip.

It is found in the fimbrium. It localises to the cell outer membrane. Its function is as follows. Probably a component of the fimbrium tip. Fimbriae are filamentous appendages on the cell surface that mediate cell adhesion and biofilm formation. The sequence is that of Fimbrium subunit Fim1C (fim1C) from Phocaeicola vulgatus (strain ATCC 8482 / DSM 1447 / JCM 5826 / CCUG 4940 / NBRC 14291 / NCTC 11154) (Bacteroides vulgatus).